The chain runs to 468 residues: Zinc finger protein mex-5 (468 aa).

Residues Met-1–Thr-19 show a composition bias toward low complexity. The disordered stretch occupies residues Met-1–Pro-32. Residue Thr-186 is modified to Phosphothreonine; by mbk-2. The span at Asn-243–Gly-254 shows a compositional bias: basic and acidic residues. The disordered stretch occupies residues Asn-243–Pro-269. 2 C3H1-type zinc fingers span residues Asn-270–Lys-299 and Lys-314–Asp-344. Positions Asp-414–Tyr-468 are disordered. Over residues Ser-451 to Glu-460 the composition is skewed to polar residues. At Ser-458 the chain carries Phosphoserine.

As to quaternary structure, interacts (when phosphorylated on Thr-186) with plk-1 (via POLO box domain) and plk-2 (via POLO box domain). Post-translationally, phosphorylation on Ser-458 by par-1 promotes localization of the protein to the anterior cytoplasm of the zygote. Phosphorylation by mbk-1 appears to be required for subsequent phosphorylation by plk-1. In terms of tissue distribution, asymmetrically localized to the anterior of the zygote before mitotic division, then differentially distributed to the somatic blastomere precursor cells.

It is found in the cytoplasm. In terms of biological role, functions with mex-6 to affect embryonic viability, establish soma germline asymmetry in embryos and establish plk-1, pie-1, mex-1, and pos-1 asymmetry in embryos. Also affects formation of intestinal cells. Binds to mRNA in vitro, and inhibits pgl-3-mediated P-granule formation, probably by competing with pgl-3 for binding to mRNA. Required for neg-1 expression in anterior blastomeres during embryogenesis. This Caenorhabditis elegans protein is Zinc finger protein mex-5.